The following is a 278-amino-acid chain: Orotidine 5'-phosphate decarboxylase (278 aa).

Substrate contacts are provided by residues aspartate 40, 62–64, 93–102, tyrosine 223, and arginine 242; these read KTH and DRKFADIGNT. The active-site Proton donor is the lysine 95.

Belongs to the OMP decarboxylase family.

The enzyme catalyses orotidine 5'-phosphate + H(+) = UMP + CO2. It functions in the pathway pyrimidine metabolism; UMP biosynthesis via de novo pathway; UMP from orotate: step 2/2. This is Orotidine 5'-phosphate decarboxylase (URA1) from Schizophyllum commune (Split gill fungus).